The following is a 140-amino-acid chain: Small ribosomal subunit protein uS12 (140 aa).

A 3-methylthioaspartic acid modification is found at Asp-102. Positions 121-140 are disordered; it reads ANRQQSRSKYGAKKPKAAKK. Residues 130–140 show a composition bias toward basic residues; that stretch reads YGAKKPKAAKK.

Belongs to the universal ribosomal protein uS12 family. Part of the 30S ribosomal subunit. Contacts proteins S8 and S17. May interact with IF1 in the 30S initiation complex.

Functionally, with S4 and S5 plays an important role in translational accuracy. In terms of biological role, interacts with and stabilizes bases of the 16S rRNA that are involved in tRNA selection in the A site and with the mRNA backbone. Located at the interface of the 30S and 50S subunits, it traverses the body of the 30S subunit contacting proteins on the other side and probably holding the rRNA structure together. The combined cluster of proteins S8, S12 and S17 appears to hold together the shoulder and platform of the 30S subunit. This chain is Small ribosomal subunit protein uS12, found in Alkaliphilus oremlandii (strain OhILAs) (Clostridium oremlandii (strain OhILAs)).